A 179-amino-acid polypeptide reads, in one-letter code: Large ribosomal subunit protein uL6 (179 aa).

It belongs to the universal ribosomal protein uL6 family. In terms of assembly, part of the 50S ribosomal subunit.

Its function is as follows. This protein binds to the 23S rRNA, and is important in its secondary structure. It is located near the subunit interface in the base of the L7/L12 stalk, and near the tRNA binding site of the peptidyltransferase center. The protein is Large ribosomal subunit protein uL6 of Spiroplasma kunkelii.